Reading from the N-terminus, the 369-residue chain is Pyruvate dehydrogenase E1 component subunit alpha (369 aa).

As to quaternary structure, heterodimer of an alpha and a beta chain. It depends on thiamine diphosphate as a cofactor.

It carries out the reaction N(6)-[(R)-lipoyl]-L-lysyl-[protein] + pyruvate + H(+) = N(6)-[(R)-S(8)-acetyldihydrolipoyl]-L-lysyl-[protein] + CO2. In terms of biological role, the pyruvate dehydrogenase complex catalyzes the overall conversion of pyruvate to acetyl-CoA and CO(2). It contains multiple copies of three enzymatic components: pyruvate dehydrogenase (E1), dihydrolipoamide acetyltransferase (E2) and lipoamide dehydrogenase (E3). This chain is Pyruvate dehydrogenase E1 component subunit alpha (pdhA), found in Geobacillus stearothermophilus (Bacillus stearothermophilus).